Reading from the N-terminus, the 408-residue chain is MAGRGFSWGPGHLNEDNARFLLLAALIVLYLLGGAAVFSALELAHERQAKQRWEERLANFSRGHNLSRDELRGFLRHYEEATRAGIRVDNVRPRWDFTGAFYFVGTVVSTIGFGMTTPATVGGKIFLIFYGLVGCSSTILFFNLFLERLITIIAYIMKSCHQRQLRRRGALPQESLKDAGQCEVDSLAGWKPSVYYVMLILCTASILISCCASAMYTPIEGWSYFDSLYFCFVAFSTIGFGDLVSSQNAHYESQGLYRFANFVFILMGVCCIYSLFNVISILIKQSLNWILRKMDSGCCPQCQRGLLRSRRNVVMPGSVRNRCNISIETDGVAESDTDGRRLSGEMISMKDLLAANKASLAILQKQLSEMANGCPHQTSTLARDNEFSGGVGAFAIMNNRLAETSGDR.

Topologically, residues 1-19 (MAGRGFSWGPGHLNEDNAR) are cytoplasmic. The helical transmembrane segment at 20 to 40 (FLLLAALIVLYLLGGAAVFSA) threads the bilayer. N-linked (GlcNAc...) asparagine glycosylation is found at Asn59 and Asn65. An intramembrane region (pore-forming) is located at residues 95 to 115 (WDFTGAFYFVGTVVSTIGFGM). Residues Thr110, Ile111, and Gly112 each contribute to the K(+) site. Residues 110 to 115 (TIGFGM) are selectivity filter 1. A helical transmembrane segment spans residues 125-145 (IFLIFYGLVGCSSTILFFNLF). At 146-193 (LERLITIIAYIMKSCHQRQLRRRGALPQESLKDAGQCEVDSLAGWKPS) the chain is on the cytoplasmic side. The helical transmembrane segment at 194 to 214 (VYYVMLILCTASILISCCASA) threads the bilayer. An intramembrane region (pore-forming) is located at residues 224-244 (YFDSLYFCFVAFSTIGFGDLV). Residues Thr237, Ile238, Gly239, and Phe240 each coordinate K(+). The interval 237–242 (TIGFGD) is selectivity filter 2. A helical transmembrane segment spans residues 263–283 (VFILMGVCCIYSLFNVISILI). Residues 284 to 408 (KQSLNWILRK…NRLAETSGDR (125 aa)) are Cytoplasmic-facing.

Belongs to the two pore domain potassium channel (TC 1.A.1.8) family. Homodimer. Heterodimer with KCNK12. As to expression, expressed in microglia (at protein level).

The protein resides in the cell membrane. It catalyses the reaction K(+)(in) = K(+)(out). Its activity is regulated as follows. The channel conductance is activated by arachidonic acid and inhibited by Ba(2+) ions, volatile anesthetics such as halothane and antiarrhythmic drugs mexiletine and lidocaine. Insensitive to extracellular pH change. In terms of biological role, k(+) channel that conducts outward rectifying tonic currents potentiated by purinergic signals. Homo- and heterodimerizes to form functional channels with distinct regulatory and gating properties. Contributes most of K(+) currents at the plasma membrane of resting microglia. Maintains a depolarized membrane potential required for proper ramified microglia morphology and phagocytosis, selectively mediating microglial pruning of presynaptic compartments at hippocampal excitatory synapses. Upon local release of ATP caused by neuronal injury or infection, it is potentiated by P2RY12 and P2RX7 receptor signaling and contributes to ATP-triggered K(+) efflux underlying microglial NLRP3 inflammasome assembly and IL1B release. The polypeptide is Potassium channel subfamily K member 13 (Homo sapiens (Human)).